We begin with the raw amino-acid sequence, 327 residues long: Mycothiol acetyltransferase (327 aa).

2 N-acetyltransferase domains span residues 11-159 (EPHG…VTLP) and 162-327 (VQIR…EGTS). Residue E42 participates in 1D-myo-inositol 2-(L-cysteinylamino)-2-deoxy-alpha-D-glucopyranoside binding. Residue 89-91 (LVI) participates in acetyl-CoA binding. 1D-myo-inositol 2-(L-cysteinylamino)-2-deoxy-alpha-D-glucopyranoside contacts are provided by E189, K228, and E251. Residues 255 to 257 (LGV) and 262 to 268 (QGLGLGR) each bind acetyl-CoA. Y289 contributes to the 1D-myo-inositol 2-(L-cysteinylamino)-2-deoxy-alpha-D-glucopyranoside binding site. 294–299 (NAPAIR) contacts acetyl-CoA.

It belongs to the acetyltransferase family. MshD subfamily. Monomer.

It carries out the reaction 1D-myo-inositol 2-(L-cysteinylamino)-2-deoxy-alpha-D-glucopyranoside + acetyl-CoA = mycothiol + CoA + H(+). Functionally, catalyzes the transfer of acetyl from acetyl-CoA to desacetylmycothiol (Cys-GlcN-Ins) to form mycothiol. The chain is Mycothiol acetyltransferase from Acidothermus cellulolyticus (strain ATCC 43068 / DSM 8971 / 11B).